The following is a 579-amino-acid chain: Thiol:disulfide interchange protein DsbD (579 aa).

Positions 1-16 (MKKLFLFFTLIFTAFA) are cleaved as a signal peptide. Disulfide bonds link Cys124/Cys129 and Cys193/Cys315. 8 helical membrane-spanning segments follow: residues 178-198 (IFGFFLLGLGLAFTPCVLPML), 230-250 (LTYTLLGLAVAAIGLPFQIAL), 254-274 (YVMIGLSILFVVLALSMFGLF), 296-316 (GAFGGAFAMGMIAGLVASPCT), 337-357 (AATLYLLALGMGVPLMLITLF), 376-396 (FGFVMLALPVFLLSRILPEVW), 397-417 (EPRLWAGLATVFFIWFALQMS), and 420-440 (GFGYAIKIISFVLAMVTVQPL). The 131-residue stretch at 449–579 (TTTQSAVENK…AFSNWLKALH (131 aa)) folds into the Thioredoxin domain. Residues Cys495 and Cys498 are joined by a disulfide bond.

This sequence belongs to the thioredoxin family. DsbD subfamily.

The protein resides in the cell inner membrane. The enzyme catalyses [protein]-dithiol + NAD(+) = [protein]-disulfide + NADH + H(+). It carries out the reaction [protein]-dithiol + NADP(+) = [protein]-disulfide + NADPH + H(+). Its function is as follows. Required to facilitate the formation of correct disulfide bonds in some periplasmic proteins and for the assembly of the periplasmic c-type cytochromes. Acts by transferring electrons from cytoplasmic thioredoxin to the periplasm. This transfer involves a cascade of disulfide bond formation and reduction steps. The sequence is that of Thiol:disulfide interchange protein DsbD from Haemophilus influenzae (strain PittEE).